The sequence spans 177 residues: Large ribosomal subunit protein uL6 (177 aa).

This sequence belongs to the universal ribosomal protein uL6 family. Part of the 50S ribosomal subunit.

Functionally, this protein binds to the 23S rRNA, and is important in its secondary structure. It is located near the subunit interface in the base of the L7/L12 stalk, and near the tRNA binding site of the peptidyltransferase center. The polypeptide is Large ribosomal subunit protein uL6 (Salmonella newport (strain SL254)).